Reading from the N-terminus, the 865-residue chain is Adenylate cyclase (865 aa).

Positions 1–540 are catalytic; that stretch reads MYLYIETLKQ…DISSHFPIRL (540 aa). The segment at 546 to 865 is regulatory; that stretch reads KALYSPCEIR…FNDYQAVHHH (320 aa).

It belongs to the adenylyl cyclase class-1 family.

It is found in the cytoplasm. It catalyses the reaction ATP = 3',5'-cyclic AMP + diphosphate. The sequence is that of Adenylate cyclase (cya) from Proteus mirabilis.